Here is a 276-residue protein sequence, read N- to C-terminus: SKA complex subunit 1 homolog (276 aa).

Residues 48-78 (VDVSLTAMEAQLQAVRRRLQEEREAFPKAKK) adopt a coiled-coil conformation.

Belongs to the SKA1 family.

The sequence is that of SKA complex subunit 1 homolog from Oryza sativa subsp. japonica (Rice).